Consider the following 595-residue polypeptide: Elongation factor 4 (595 aa).

Residues 2 to 184 (ETIRNFSIIA…TITHNIPYPK (183 aa)) enclose the tr-type G domain. GTP contacts are provided by residues 14–19 (DHGKST) and 131–134 (NKID).

The protein belongs to the TRAFAC class translation factor GTPase superfamily. Classic translation factor GTPase family. LepA subfamily.

Its subcellular location is the cell membrane. The catalysed reaction is GTP + H2O = GDP + phosphate + H(+). Functionally, required for accurate and efficient protein synthesis under certain stress conditions. May act as a fidelity factor of the translation reaction, by catalyzing a one-codon backward translocation of tRNAs on improperly translocated ribosomes. Back-translocation proceeds from a post-translocation (POST) complex to a pre-translocation (PRE) complex, thus giving elongation factor G a second chance to translocate the tRNAs correctly. Binds to ribosomes in a GTP-dependent manner. This is Elongation factor 4 from Buchnera aphidicola subsp. Baizongia pistaciae (strain Bp).